The primary structure comprises 74 residues: Mitochondrial import receptor subunit TOM6 homolog (74 aa).

A compositionally biased stretch (low complexity) spans 1-20; that stretch reads MASSGVTVSAAGSASEASEV. The tract at residues 1 to 21 is disordered; the sequence is MASSGVTVSAAGSASEASEVP. Alanine 2 carries the post-translational modification N-acetylalanine.

It belongs to the Tom6 family. Forms part of the preprotein translocase complex of the outer mitochondrial membrane (TOM complex) which consists of at least 7 different proteins (TOMM5, TOMM6, TOMM7, TOMM20, TOMM22, TOMM40 and TOMM70).

The protein resides in the mitochondrion outer membrane. This is Mitochondrial import receptor subunit TOM6 homolog (Tomm6) from Mus musculus (Mouse).